A 59-amino-acid polypeptide reads, in one-letter code: Crassipeptide cce9a (59 aa).

Residues 1–30 (ADNHARVAGPRAVASGRYATEKAFLQMMTR) constitute a propeptide that is removed on maturation.

In terms of processing, contains 3 disulfide bonds. In terms of tissue distribution, expressed by the venom duct.

It is found in the secreted. Crassispirid snail peptide that induces sleep-like symptoms in young mice (12 and 14 days) and hyperactivity in older mice (16 days), when intracranially injected. The sequence is that of Crassipeptide cce9a from Crassispira cerithina (Sea snail).